A 384-amino-acid polypeptide reads, in one-letter code: ATP synthase subunit a (384 aa).

A disordered region spans residues 22-60; that stretch reads PAPAAAPVEQHGAPAPEAAAPDAHAAPAGEHGAAVEAHA. Transmembrane regions (helical) follow at residues 131–151, 189–209, 218–238, 258–278, 293–313, and 319–339; these read KHVM…LAAV, FVPY…FGLI, NLSV…YAAI, LAPL…TKPF, FVIL…VAFG, and LGIF…FTML. The interval 355–384 is disordered; it reads HGHAEEHGHAGPGMGSEHGSHVAGASPGHG.

This sequence belongs to the ATPase A chain family. In terms of assembly, F-type ATPases have 2 components, CF(1) - the catalytic core - and CF(0) - the membrane proton channel. CF(1) has five subunits: alpha(3), beta(3), gamma(1), delta(1), epsilon(1). CF(0) has three main subunits: a(1), b(2) and c(9-12). The alpha and beta chains form an alternating ring which encloses part of the gamma chain. CF(1) is attached to CF(0) by a central stalk formed by the gamma and epsilon chains, while a peripheral stalk is formed by the delta and b chains.

It localises to the cell inner membrane. Functionally, key component of the proton channel; it plays a direct role in the translocation of protons across the membrane. The chain is ATP synthase subunit a from Anaeromyxobacter dehalogenans (strain 2CP-1 / ATCC BAA-258).